Here is a 378-residue protein sequence, read N- to C-terminus: Anhydro-N-acetylmuramic acid kinase (378 aa).

Position 9-16 (9-16 (GTSADGID)) interacts with ATP.

This sequence belongs to the anhydro-N-acetylmuramic acid kinase family.

The enzyme catalyses 1,6-anhydro-N-acetyl-beta-muramate + ATP + H2O = N-acetyl-D-muramate 6-phosphate + ADP + H(+). Its pathway is amino-sugar metabolism; 1,6-anhydro-N-acetylmuramate degradation. The protein operates within cell wall biogenesis; peptidoglycan recycling. Its function is as follows. Catalyzes the specific phosphorylation of 1,6-anhydro-N-acetylmuramic acid (anhMurNAc) with the simultaneous cleavage of the 1,6-anhydro ring, generating MurNAc-6-P. Is required for the utilization of anhMurNAc either imported from the medium or derived from its own cell wall murein, and thus plays a role in cell wall recycling. This Synechococcus elongatus (strain ATCC 33912 / PCC 7942 / FACHB-805) (Anacystis nidulans R2) protein is Anhydro-N-acetylmuramic acid kinase.